The following is a 175-amino-acid chain: MYKNIIKLISGDITKIPEVEAIVNAANSSLEMGGGVCGAIFKAAGSELAQECKEIGGCNTGEAVITKGYNLPNKYIIHTVGPRYSTGENREAERLASAYYESLKLANEKGIRRIAFPSISTGIYRFPVDEGAKIALTTAIKFLDKNPSSFDLILWVLDEKTYIVYKEKYKKLLEI.

A Macro domain is found at 1–173 (MYKNIIKLIS…VYKEKYKKLL (173 aa)).

This sequence belongs to the MacroD-type family.

This is an uncharacterized protein from Fusobacterium nucleatum subsp. nucleatum (strain ATCC 25586 / DSM 15643 / BCRC 10681 / CIP 101130 / JCM 8532 / KCTC 2640 / LMG 13131 / VPI 4355).